The primary structure comprises 1207 residues: MRPEFIHLRTQSSYSFLESALTIEKVVELASSNKMPAICLADKGNLFGSLEFALYAVKKGLQPIHGVILNIKYDIDIFAQILLIAKDETGYKNLLKLSSLTFTKNDRKLCDHIDFEDLIEYQEGLIALCCYTDGIVGKCLLARSEEQAMLFARKLQDILGDRFYFEIMRHDLPEEQFIEDSYIRIAAELAIPLVATNKVLFSEKTMHDAHDVLLCISAGVTKEYPDRKTVSENCYFRSPHEMIELFSDLPSAIQNTVNLRERCYFAAHANPPMLPNFATKDISETDLIRKDAKEGLLARLATKFKSENIPLQNQEELKTEYFARLNYELDIICNMNFAGYFLIVSDFIKWSKKEGILVGPGRGSGAGSVVAWSLLITDLDPIKFGLLFERFLNPERISMPDFDIDFCQERREEVINYVRSKYGNNRVGQIITFGKMQAKAVIKDVARVLSLPYKFADYLTELVPFSAVNPVSLEQAMREVPELANAAKGNGLYNLEGEAELIKLVLDTSLILEGLHRHSSTHAAGIVIAGTDLVDIVPVYKDANSDMLVVGYSMKYSEIAGLIKFDFLGLQTLTVITDCKKLLKEQGIEVDFNNMTFDDNKTYQMLCKGKGVGVFQFESIGMKDALRRLKPDSIHDLIALGALYRPGPMENIPTYIACKHKLQQPDYLHELLKPILEETYGVVIYQEQVQRIAQILAGYTLGAADLLRRAMGKKIKKEMEEQEEIFVKGAIANNISESQAKSIFATVAKFAGYGFNKAHAAAYGVISYQTAYLKANYPAEFLVACLNLELNNHDKINLFLQEAKDSGIKIIAPNINISEGYFSVKSVIPQAATCHPQGPLCHPRVGGYPEKVKTVLNHESMKMDSRFCGNDIKGSRNDIEDTGYDKEKSTIIFALGAIKGVTPNFGKLVTDERKARGAFKSITDFIERLPLKSINSKLLENLIKSGCFDELHDNRLQLFSSISKLLAYSASYHAEQESNQFSLIKVSSLSPNILIASDYADNNTLAFYEFESMGLFISNHPLTQYQEIFSRLNILNTADLHNNLPDGTNRVNLAGVIQKKDSRMSARGRFVTLVLSDPENIFELSIFSEEVLKDYVHLLDVKSLVVVNCDIVKDEGGIKLTAKSFSSIEDAINNKQFELQLYPQNHEELRQIVTLLAARTNNRDQSNAKATIYLQSEGVKNFVAKITLPEKFFLQGQDFEILKGYSK.

This sequence belongs to the DNA polymerase type-C family. DnaE subfamily. DNA polymerase III contains a core (composed of alpha, epsilon and theta chains) that associates with a tau subunit. This core dimerizes to form the PolIII' complex. PolIII' associates with the gamma complex (composed of gamma, delta, delta', psi and chi chains) and with the beta chain to form the complete DNA polymerase III complex.

Its subcellular location is the cytoplasm. The catalysed reaction is DNA(n) + a 2'-deoxyribonucleoside 5'-triphosphate = DNA(n+1) + diphosphate. In terms of biological role, DNA polymerase III is a complex, multichain enzyme responsible for most of the replicative synthesis in bacteria. This DNA polymerase also exhibits 3' to 5' exonuclease activity. The alpha chain is the DNA polymerase. In Rickettsia felis (strain ATCC VR-1525 / URRWXCal2) (Rickettsia azadi), this protein is DNA polymerase III subunit alpha (dnaE).